The sequence spans 341 residues: Probable electron transfer flavoprotein subunit alpha, mitochondrial (341 aa).

Residue 285 to 313 (LYIAVGIDGAIQHLAGIKDSKVIAAINRD) coordinates FAD.

The protein belongs to the ETF alpha-subunit/FixB family. As to quaternary structure, heterodimer of an alpha and a beta subunit. It depends on FAD as a cofactor.

The protein localises to the mitochondrion matrix. Its function is as follows. The electron transfer flavoprotein serves as a specific electron acceptor for several dehydrogenases, including five acyl-CoA dehydrogenases, glutaryl-CoA and sarcosine dehydrogenase. It transfers the electrons to the main mitochondrial respiratory chain via ETF-ubiquinone oxidoreductase (ETF dehydrogenase). The chain is Probable electron transfer flavoprotein subunit alpha, mitochondrial from Schizosaccharomyces pombe (strain 972 / ATCC 24843) (Fission yeast).